Reading from the N-terminus, the 437-residue chain is Ribosomal protein uS12 methylthiotransferase RimO (437 aa).

The MTTase N-terminal domain occupies 3–118 (KKFYITTLGC…AGKILREKFP (116 aa)). Residues Cys12, Cys48, Cys81, Cys157, Cys161, and Cys164 each coordinate [4Fe-4S] cluster. In terms of domain architecture, Radical SAM core spans 143–370 (NYSKPYAYVK…RDSHLEILEE (228 aa)). The TRAM domain occupies 373–437 (ESRIGRTYDA…YEYDMNGTWV (65 aa)).

It belongs to the methylthiotransferase family. RimO subfamily. [4Fe-4S] cluster is required as a cofactor.

It is found in the cytoplasm. The catalysed reaction is L-aspartate(89)-[ribosomal protein uS12]-hydrogen + (sulfur carrier)-SH + AH2 + 2 S-adenosyl-L-methionine = 3-methylsulfanyl-L-aspartate(89)-[ribosomal protein uS12]-hydrogen + (sulfur carrier)-H + 5'-deoxyadenosine + L-methionine + A + S-adenosyl-L-homocysteine + 2 H(+). Catalyzes the methylthiolation of an aspartic acid residue of ribosomal protein uS12. This Leptospira interrogans serogroup Icterohaemorrhagiae serovar copenhageni (strain Fiocruz L1-130) protein is Ribosomal protein uS12 methylthiotransferase RimO.